The following is a 342-amino-acid chain: Type II restriction enzyme CviAII (342 aa).

The enzyme catalyses Endonucleolytic cleavage of DNA to give specific double-stranded fragments with terminal 5'-phosphates.. Its function is as follows. A P subtype restriction enzyme that recognizes the double-stranded sequence 5'-CATG-3' and cleaves after C-1. The protein is Type II restriction enzyme CviAII (CVIAIIR) of Chlorella (PBCV-1).